Consider the following 1319-residue polypeptide: Protein Jumonji (1319 aa).

Positions 1–11 are enriched in basic residues; sequence MSKERPKRNII. 7 disordered regions span residues 1 to 23, 50 to 130, 173 to 265, 351 to 382, 396 to 478, 499 to 537, and 549 to 599; these read MSKE…GMPW, DGID…PSLP, DEED…NTNG, YSNN…QSIN, HKMT…KALN, PIQK…PKRA, and QQRA…RSRA. Over residues 61–70 the composition is skewed to polar residues; it reads ASLSNGQLNG. A compositionally biased stretch (basic and acidic residues) spans 74–88; sequence GHKEDGSRSQRKDGG. The Nuclear localization signal signature appears at 96–102; sequence PAKKRPR. Over residues 98 to 107 the composition is skewed to basic residues; that stretch reads KKRPRLHAQR. The span at 109-121 shows a compositional bias: polar residues; sequence FAQSQPNSPSNTP. Acidic residues predominate over residues 173–185; the sequence is DEEDLEDEDEIEE. Polar residues predominate over residues 191 to 200; sequence VASTSCQSTP. Residues 221-251 are compositionally biased toward basic and acidic residues; it reads KDKELTPRSKARESSVGRDRSERCDESEISH. Over residues 372-382 the composition is skewed to polar residues; it reads LSHSGKAQSIN. Over residues 413–424 the composition is skewed to basic and acidic residues; sequence SAREEEVVDRPV. A compositionally biased stretch (pro residues) spans 505–515; it reads PAPPPSPPAAP. Low complexity-rich tracts occupy residues 516 to 525 and 554 to 570; these read ASPSMPQNPA and TNPT…ASKS. Over residues 583–598 the composition is skewed to basic and acidic residues; it reads RLDRDRERERERERSR. The JmjN domain occupies 607 to 648; it reads VPIFKPSSREFQDPLVYLDSFREQVESCGLCRVLPPTDWRPE. The ARID domain occupies 671–779; it reads WGPNVQKLAC…FLLSYDLLSP (109 aa). Residues 798–811 are compositionally biased toward basic and acidic residues; sequence RKRGPLEGHSDNGH. Residues 798–818 are disordered; that stretch reads RKRGPLEGHSDNGHHSLALPR. The short motif at 944 to 948 is the GSGFP motif element; that stretch reads GSGFP. One can recognise a JmjC domain in the interval 954–1118; that stretch reads PFSKHGWNLT…LGYEAAKDLK (165 aa).

This sequence belongs to the JARID2 family. Associates with the PRC2 complex.

It is found in the nucleus. Its function is as follows. Regulator of histone methyltransferase complexes that plays an essential role in embryonic development. Acts by modulating histone methyltransferase activity and promoting the recruitment of histone methyltransferase complexes to their target genes. Binds DNA and mediates the recruitment of the PRC2 complex to target genes in embryonic stem cells. Does not have histone demethylase activity but regulates activity of various histone methyltransferase complexes. In embryonic stem cells, it associates with the PRC2 complex and inhibits trimethylation of 'Lys-27' of histone H3 (H3K27me3) by the PRC2 complex, thereby playing a key role in differentiation of embryonic stem cells and normal development. This chain is Protein Jumonji (jarid2b), found in Danio rerio (Zebrafish).